Reading from the N-terminus, the 288-residue chain is Ankyrin repeat and SOCS box protein 8 (288 aa).

A Phosphoserine modification is found at serine 17. 4 ANK repeats span residues 52–81 (GTLKPLHCACMVSDADCVELLLEKGAEVNA), 85–113 (YNRTALHYAAERDEACVEVLLEYGANPNA), 117–146 (NRDTPLHWAAFKNNAECVRALLESGASVNA), and 150–179 (NNDTPLSWAAMKGNLESVSILLDYGAEVRV). An SOCS box domain is found at 235 to 288 (QLCEKLTVLCSAPGTLKTLARYAVRRSLGLQYLPDAVKGLPLPVSLKDYLLLLE).

It belongs to the ankyrin SOCS box (ASB) family. As to quaternary structure, interacts with TBK1; this interaction promotes TBK1 proteasomal degradation. Phosphorylated by TBK1.

The protein localises to the cytoplasm. The protein operates within protein modification; protein ubiquitination. May be a substrate-recognition component of a SCF-like ECS (Elongin-Cullin-SOCS-box protein) E3 ubiquitin-protein ligase complex which mediates the ubiquitination and subsequent proteasomal degradation of target proteins. Inhibits IFN-beta production through the IRF3 signaling pathway by targeting TBK1 via 'Lys-48'-linked ubiquitination, leading to its proteasomal degradation. The protein is Ankyrin repeat and SOCS box protein 8 (Asb8) of Mus musculus (Mouse).